Consider the following 343-residue polypeptide: uncharacterized protein (343 aa).

Belongs to the IIV-6 219L family.

This is an uncharacterized protein from Invertebrate iridescent virus 6 (IIV-6).